We begin with the raw amino-acid sequence, 205 residues long: N-(5'-phosphoribosyl)anthranilate isomerase (205 aa).

Belongs to the TrpF family.

The catalysed reaction is N-(5-phospho-beta-D-ribosyl)anthranilate = 1-(2-carboxyphenylamino)-1-deoxy-D-ribulose 5-phosphate. It functions in the pathway amino-acid biosynthesis; L-tryptophan biosynthesis; L-tryptophan from chorismate: step 3/5. The chain is N-(5'-phosphoribosyl)anthranilate isomerase from Acidithiobacillus ferrooxidans (strain ATCC 23270 / DSM 14882 / CIP 104768 / NCIMB 8455) (Ferrobacillus ferrooxidans (strain ATCC 23270)).